Consider the following 1190-residue polypeptide: Ras-specific guanine nucleotide-releasing factor 2 (1190 aa).

One can recognise a PH 1 domain in the interval 22-133; it reads EGTKRGFLSK…WMEAIHQASY (112 aa). The stretch at 155-193 forms a coiled coil; that stretch reads ETEKIAANQLRHQLEDQDTEIERLKSEIVALNKTKERMR. In terms of domain architecture, IQ spans 205 to 234; sequence DIKKIKKVQSFMRGWLCRRKWKTIVQDYIC. Positions 243–429 constitute a DH domain; that stretch reads KRNQIVFTMV…EELSRVMHDE (187 aa). In terms of domain architecture, PH 2 spans 470–588; it reads PSVERGKLSK…WMSDISQCVD (119 aa). One can recognise an N-terminal Ras-GEF domain in the interval 635–755; the sequence is KVPQIRYASV…LTSSLNSRIG (121 aa). Positions 713–744 are disordered; it reads VDGKSPRLCRKFSSPPPLAVSRTSSPVRARKL. Phosphoserine is present on residues S725 and S726. The residue at position 736 (S736) is a Phosphoserine; by CDK5. Positions 743-751 are regulates proteasomal degradation; the sequence is KLSLTSSLN. A phosphoserine mark is found at S745 and S749. Residues 757–826 are disordered; it reads LDLTTSSSSS…QPGGQVADST (70 aa). The span at 760 to 776 shows a compositional bias: low complexity; sequence TTSSSSSSPTTTVHSPA. The segment covering 798–810 has biased composition (polar residues); it reads TDMSPCRSPSTTP. Phosphoserine is present on residues S801, S805, and S925. Residues 955 to 1187 form the Ras-GEF domain; the sequence is SAMELAEQIT…YELSLKIEPR (233 aa). The segment at 1052 to 1081 is responsible of the affinity for farnesylated versus geranylgeranylated Ras; that stretch reads ALNRSAIYRLKKTWTKVSKQTKALMDKLQK.

Homooligomer and heterooligomer with RASGRF1. Interacts with Ras and RAC1. Interacts in a calcium-dependent manner with calmodulin. Interacts with CDK5R1 and probably EPB49. Interacts with the AMPA receptor through GRIA1. Interacts with microtubules. Post-translationally, phosphorylated by CDK5; down-regulates RASGRF2-mediated RAC1 activation. Ubiquitinated upon interaction with Ras. Ubiquitination leads to degradation through the 26S proteasome. Widely expressed. Detected in brain, lung, spleen, pancreas, kidney, liver, heart, mammary gland and skeletal muscle.

The protein resides in the cytoplasm. Its subcellular location is the cell membrane. It is found in the endoplasmic reticulum membrane. In terms of biological role, functions as a calcium-regulated nucleotide exchange factor activating both Ras and RAC1 through the exchange of bound GDP for GTP. Preferentially activates HRAS in vivo compared to RRAS based on their different types of prenylation. Functions in synaptic plasticity by contributing to the induction of long term potentiation. The chain is Ras-specific guanine nucleotide-releasing factor 2 (Rasgrf2) from Rattus norvegicus (Rat).